We begin with the raw amino-acid sequence, 122 residues long: Phosphoribosyl-ATP pyrophosphatase (122 aa).

This sequence belongs to the PRA-PH family.

It is found in the cytoplasm. The enzyme catalyses 1-(5-phospho-beta-D-ribosyl)-ATP + H2O = 1-(5-phospho-beta-D-ribosyl)-5'-AMP + diphosphate + H(+). It functions in the pathway amino-acid biosynthesis; L-histidine biosynthesis; L-histidine from 5-phospho-alpha-D-ribose 1-diphosphate: step 2/9. In Burkholderia thailandensis (strain ATCC 700388 / DSM 13276 / CCUG 48851 / CIP 106301 / E264), this protein is Phosphoribosyl-ATP pyrophosphatase.